Here is a 927-residue protein sequence, read N- to C-terminus: F-box only protein 11 (927 aa).

The interval 1–132 (MNSVRAANRR…STSTTENFGH (132 aa)) is disordered. Over residues 7–16 (ANRRPRRVSR) the composition is skewed to basic residues. Over residues 17–27 (PRPVQQQQQQP) the composition is skewed to low complexity. The span at 28 to 68 (PQQPPPQPPQQQPPQQQPPPPPQQQQQQQPPPPPPPPPPLP) shows a compositional bias: pro residues. The segment covering 114-129 (PTKNSMEGASTSTTEN) has biased composition (polar residues). An F-box domain is found at 153-199 (QYLQEKLPDEVVLKIFSYLLEQDLCRAACVCKRFSELANDPILWKRL). PbH1 repeat units lie at residues 395–417 (GACP…YITD), 418–440 (HAQG…WVKN), 441–463 (HGNP…FTFD), 464–486 (HGMG…EVKA), 487–509 (YANP…YVHE), 510–532 (KGRG…WITS), 533–555 (NSDP…YIFG), 556–578 (DGRG…QIRT), 579–601 (NSCP…YVHE), 602–624 (KGQG…WVTT), 625–647 (GSTP…YFYD), 648–670 (NGHG…QIRT), 671–693 (GSNP…LVYN), 694–716 (SGLG…WIKT), 717–739 (DSNP…CIFN), 740–762 (GGRG…LIST), 763–785 (NSHP…EITN), 786–808 (HATA…FLAS), and 809–830 (GVNV…EKAV). Residues 833–904 (GQCLYKISSY…LSNPCTLAGE (72 aa)) form a UBR-type zinc finger.

Component of the SCF(FBXO11) complex consisting of CUL1, RBX1, SKP1 and FBXO11. Interacts with CIITA. Isoform 5 is expressed in keratinocytes, fibroblasts and melanocytes.

The protein localises to the nucleus. It localises to the chromosome. The protein operates within protein modification; protein ubiquitination. Functionally, substrate recognition component of a SCF (SKP1-CUL1-F-box protein) E3 ubiquitin-protein ligase complex which mediates the ubiquitination and subsequent proteasomal degradation of target proteins, such as DTL/CDT2, BCL6, SNAI1 and PRDM1/BLIMP1. The SCF(FBXO11) complex mediates ubiquitination and degradation of BCL6, thereby playing a role in the germinal center B-cells terminal differentiation toward memory B-cells and plasma cells. The SCF(FBXO11) complex also mediates ubiquitination and degradation of DTL, an important step for the regulation of TGF-beta signaling, cell migration and the timing of the cell-cycle progression and exit. The SCF(FBXO11) complex also catalyzes ubiquitination and degradation of GSK3B-phosphorylated SNAI1. Binds to and neddylates phosphorylated p53/TP53, inhibiting its transcriptional activity. Plays a role in the regulatiom of erythropoiesis but not myelopoiesis or megakaryopoiesis. Mechanistically, activates erythroid genes by mediating the degradation of BAHD1, a heterochromatin-associated protein that recruits corepressors to H3K27me3 marks. Participates in macrophage cell death and inflammation in response to bacterial toxins by regulating the expression of complement 5a receptor 1/C5AR1 and IL-1beta. Acts as a critical regulator to determine the level of MHC-II by mediating the recognition of degron at the P/S/T domain of CIITA leading to its ubiquitination and subsequent degradation via the proteasome. Participates in the antiviral repsonse by initiating the activation of TBK1-IRF3-IFN-I axis. Mediates the 'Lys-63'-linked ubiquitination of TRAF3 to strengthen the interaction between TRAF3 and TBK1. The polypeptide is F-box only protein 11 (Homo sapiens (Human)).